The sequence spans 155 residues: V-type proton ATPase 16 kDa proteolipid subunit c (155 aa).

Residues methionine 1 to tyrosine 10 are Lumenal-facing. A helical transmembrane segment spans residues alanine 11–glycine 33. Over threonine 34 to serine 55 the chain is Cytoplasmic. A helical membrane pass occupies residues isoleucine 56–isoleucine 76. Residues alanine 77–glutamine 92 are Lumenal-facing. The helical transmembrane segment at leucine 93–glycine 114 threads the bilayer. Topologically, residues aspartate 115–methionine 131 are cytoplasmic. The helical transmembrane segment at isoleucine 132–leucine 152 threads the bilayer. Topologically, residues serine 153–lysine 155 are lumenal.

Belongs to the V-ATPase proteolipid subunit family. As to quaternary structure, V-ATPase is a heteromultimeric enzyme made up of two complexes: the ATP-hydrolytic V1 complex and the proton translocation V0 complex. The V1 complex consists of three catalytic AB heterodimers that form a heterohexamer, three peripheral stalks each consisting of EG heterodimers, one central rotor including subunits D and F, and the regulatory subunits C and H. The proton translocation complex V0 consists of the proton transport subunit a, a ring of proteolipid subunits c9c'', rotary subunit d, subunits e and f, and the accessory subunits ATP6AP1/Ac45 and ATP6AP2/PRR. Interacts with the V0 complex V-ATPase subunit a4 ATP6V0A4. Interacts with LASS2. Interacts with RNF182; this interaction leads to ubiquitination and degradation via the proteasome pathway. In terms of processing, ubiquitinated by RNF182, leading to its degradation via the ubiquitin-proteasome pathway. As to expression, expressed in brain (at protein level).

The protein resides in the cytoplasmic vesicle. The protein localises to the clathrin-coated vesicle membrane. Its subcellular location is the secretory vesicle. It is found in the synaptic vesicle membrane. Functionally, proton-conducting pore forming subunit of the V0 complex of vacuolar(H+)-ATPase (V-ATPase), a multisubunit enzyme composed of a peripheral complex (V1) that hydrolyzes ATP and a membrane integral complex (V0) that translocates protons. V-ATPase is responsible for acidifying and maintaining the pH of intracellular compartments and in some cell types, is targeted to the plasma membrane, where it is responsible for acidifying the extracellular environment. The sequence is that of V-type proton ATPase 16 kDa proteolipid subunit c (ATP6V0C) from Bos taurus (Bovine).